A 199-amino-acid polypeptide reads, in one-letter code: Ribonuclease HII (199 aa).

Residues 11–199 form the RNase H type-2 domain; sequence SRVAGVDEVG…RRSFLRRLLG (189 aa). A divalent metal cation-binding residues include Asp17, Glu18, and Asp113.

This sequence belongs to the RNase HII family. Mn(2+) is required as a cofactor. Mg(2+) serves as cofactor.

Its subcellular location is the cytoplasm. The enzyme catalyses Endonucleolytic cleavage to 5'-phosphomonoester.. In terms of biological role, endonuclease that specifically degrades the RNA of RNA-DNA hybrids. The chain is Ribonuclease HII from Synechococcus sp. (strain CC9902).